Reading from the N-terminus, the 378-residue chain is C-type lectin domain family 17, member A (378 aa).

Positions 1-119 (MHNLYSITGY…PPLPCKPRNM (119 aa)) are disordered. At 1-172 (MHNLYSITGY…GCCQKRWMVY (172 aa)) the chain is on the cytoplasmic side. 3 stretches are compositionally biased toward acidic residues: residues 17 to 27 (MEEEEEDDDYE), 43 to 53 (MEEEEEDDDYE), and 69 to 79 (MEEEEEDDDYE). Pro residues predominate over residues 86–101 (KDLPPKPGSSAPPRPP). Residues 173 to 193 (LCLLVVTSLFLGCLGLTVTLI) form a helical; Signal-anchor for type II membrane protein membrane-spanning segment. The Extracellular segment spans residues 194-378 (KYQELMEELR…YWICERKCSC (185 aa)). Residues Asn-215 and Asn-237 are each glycosylated (N-linked (GlcNAc...) asparagine). Cystine bridges form between Cys-254-Cys-265, Cys-282-Cys-372, and Cys-350-Cys-364. In terms of domain architecture, C-type lectin spans 261-373 (FEGKCYYFSP…CYKTTYWICE (113 aa)). Residue Asn-285 is glycosylated (N-linked (GlcNAc...) asparagine). 5 residues coordinate Ca(2+): Glu-341, Asn-343, Glu-348, Asn-360, and Asp-361.

As to quaternary structure, oligomer; disulfide-linked. Post-translationally, phosphorylated on tyrosine residues. In terms of tissue distribution, expressed on dividing B-cells of germinal centers in various tissues, including lymph nodes, tonsils, stomach, intestine, appendix and spleen.

It is found in the membrane. Cell surface receptor which may be involved in carbohydrate-mediated communication between cells in the germinal center. Binds glycans with terminal alpha-linked mannose or fucose residues. In Homo sapiens (Human), this protein is C-type lectin domain family 17, member A (CLEC17A).